The following is a 407-amino-acid chain: 4-hydroxybenzoate polyprenyltransferase, mitochondrial (407 aa).

The N-terminal 20 residues, 1–20 (MAFFGLSRVSRRLLKSSVSV), are a transit peptide targeting the mitochondrion. 6 helical membrane-spanning segments follow: residues 137 to 157 (IGTW…ADPG), 162 to 182 (FKYM…GCTI), 210 to 230 (FQGI…LLQL), 254 to 274 (FTFW…LLGW), 279 to 299 (GSIA…WTLV), and 330 to 350 (LWLT…GFSA).

It belongs to the UbiA prenyltransferase family. The cofactor is Mg(2+). Expressed in flowers.

It localises to the mitochondrion inner membrane. The enzyme catalyses an all-trans-polyprenyl diphosphate + 4-hydroxybenzoate = a 4-hydroxy-3-(all-trans-polyprenyl)benzoate + diphosphate. The protein operates within cofactor biosynthesis; ubiquinone biosynthesis. Catalyzes the prenylation of para-hydroxybenzoate (PHB) with an all-trans polyprenyl group. Mediates the second step in the final reaction sequence of coenzyme Q (CoQ) biosynthesis, which is the condensation of the polyisoprenoid side chain with PHB, generating the first membrane-bound Q intermediate. Required for embryo development. The polypeptide is 4-hydroxybenzoate polyprenyltransferase, mitochondrial (Arabidopsis thaliana (Mouse-ear cress)).